The chain runs to 365 residues: Phosphoserine aminotransferase (365 aa).

Position 40 (arginine 40) interacts with L-glutamate. Pyridoxal 5'-phosphate-binding positions include 74-75 (AS), phenylalanine 99, threonine 155, aspartate 177, and glutamine 200. Lysine 201 bears the N6-(pyridoxal phosphate)lysine mark. Residue 241–242 (NT) coordinates pyridoxal 5'-phosphate.

Belongs to the class-V pyridoxal-phosphate-dependent aminotransferase family. SerC subfamily. As to quaternary structure, homodimer. Pyridoxal 5'-phosphate is required as a cofactor.

It is found in the cytoplasm. It carries out the reaction O-phospho-L-serine + 2-oxoglutarate = 3-phosphooxypyruvate + L-glutamate. The enzyme catalyses 4-(phosphooxy)-L-threonine + 2-oxoglutarate = (R)-3-hydroxy-2-oxo-4-phosphooxybutanoate + L-glutamate. It functions in the pathway amino-acid biosynthesis; L-serine biosynthesis; L-serine from 3-phospho-D-glycerate: step 2/3. In terms of biological role, catalyzes the reversible conversion of 3-phosphohydroxypyruvate to phosphoserine and of 3-hydroxy-2-oxo-4-phosphonooxybutanoate to phosphohydroxythreonine. The sequence is that of Phosphoserine aminotransferase from Lactococcus lactis subsp. cremoris (strain SK11).